Consider the following 750-residue polypeptide: Eukaryotic translation initiation factor 3 subunit B (750 aa).

The 87-residue stretch at 42–128 folds into the RRM domain; it reads TFVVVDGLPE…HTLRVNKMTD (87 aa). WD repeat units follow at residues 195-234, 236-292, 309-348, and 519-562; these read DRQQ…RLRR, PHPF…PLRS, SAKF…LMDK, and LDKK…EKPE.

Belongs to the eIF-3 subunit B family. Component of the eukaryotic translation initiation factor 3 (eIF-3) complex.

It localises to the cytoplasm. In terms of biological role, RNA-binding component of the eukaryotic translation initiation factor 3 (eIF-3) complex, which is involved in protein synthesis of a specialized repertoire of mRNAs and, together with other initiation factors, stimulates binding of mRNA and methionyl-tRNAi to the 40S ribosome. The eIF-3 complex specifically targets and initiates translation of a subset of mRNAs involved in cell proliferation. The sequence is that of Eukaryotic translation initiation factor 3 subunit B from Chaetomium globosum (strain ATCC 6205 / CBS 148.51 / DSM 1962 / NBRC 6347 / NRRL 1970) (Soil fungus).